We begin with the raw amino-acid sequence, 304 residues long: Dihydroorotate dehydrogenase B (NAD(+)), catalytic subunit (304 aa).

Residues serine 20 and 44 to 45 (KA) each bind FMN. Substrate-binding positions include lysine 44 and 68–72 (NAIGL). FMN is bound by residues asparagine 98 and asparagine 126. Substrate is bound at residue asparagine 126. The active-site Nucleophile is cysteine 129. FMN contacts are provided by lysine 164 and isoleucine 190. 191 to 192 (NT) lines the substrate pocket. Residues glycine 216, 242 to 243 (GG), and 264 to 265 (GT) contribute to the FMN site.

The protein belongs to the dihydroorotate dehydrogenase family. Type 1 subfamily. Heterotetramer of 2 PyrK and 2 PyrD type B subunits. The cofactor is FMN.

It localises to the cytoplasm. It carries out the reaction (S)-dihydroorotate + NAD(+) = orotate + NADH + H(+). It functions in the pathway pyrimidine metabolism; UMP biosynthesis via de novo pathway; orotate from (S)-dihydroorotate (NAD(+) route): step 1/1. In terms of biological role, catalyzes the conversion of dihydroorotate to orotate with NAD(+) as electron acceptor. This is Dihydroorotate dehydrogenase B (NAD(+)), catalytic subunit (pyrD) from Oceanobacillus iheyensis (strain DSM 14371 / CIP 107618 / JCM 11309 / KCTC 3954 / HTE831).